The primary structure comprises 448 residues: MNAYELNMDGLVGQTHHYAGLSSGNIASTNNALSISNPQAAARQGLEKMRQLYNMGLKQGLLPPHQRPNLNLLYQLGFKGSPSEQINKAYKTAPELLSACYSASSMWTANAATVSASVDTEDNKVHFTAANLISNLHRHQEADFSKKLLEFIFSNSDYFNHHPLLPKSMGTSDEGAANHNRLCQSHAHSGINLFVYGKKVLGNHQFEQSPIKYPARQTKEASEAIARNHLLNPERVIFACQNPLAIDQGVFHNDVISVANEHVFLVHEEAFYNQAYVLDQLKEKADFPLVIIQISKEQISVSEAVDTYLFNSQLITLPDQKNMILIAPAECQANLKVKTCIDGLVADSQNPINSVYYLDLKQSMRNGGGPACLRLRVPLNDYELKAMHQGILIDNDLLDILDKWVLKYYRTELKISDLADPQLLYECLDALDELTQILKLGSIYPFQS.

Substrate-binding positions include Ala-19–Ser-28, Asn-110, and His-137–Arg-138. Glu-174 is an active-site residue. Arg-216 is a substrate binding site. His-252 is an active-site residue. Positions 254 and 366 each coordinate substrate. Cys-372 serves as the catalytic Nucleophile.

The protein belongs to the succinylarginine dihydrolase family. In terms of assembly, homodimer.

The catalysed reaction is N(2)-succinyl-L-arginine + 2 H2O + 2 H(+) = N(2)-succinyl-L-ornithine + 2 NH4(+) + CO2. It functions in the pathway amino-acid degradation; L-arginine degradation via AST pathway; L-glutamate and succinate from L-arginine: step 2/5. Catalyzes the hydrolysis of N(2)-succinylarginine into N(2)-succinylornithine, ammonia and CO(2). This chain is N-succinylarginine dihydrolase, found in Legionella pneumophila (strain Paris).